A 292-amino-acid chain; its full sequence is 4-diphosphocytidyl-2-C-methyl-D-erythritol kinase (292 aa).

The active site involves Lys-20. An ATP-binding site is contributed by 103–113; that stretch reads PMGGGIGGGSS. Asp-145 is an active-site residue.

This sequence belongs to the GHMP kinase family. IspE subfamily.

It catalyses the reaction 4-CDP-2-C-methyl-D-erythritol + ATP = 4-CDP-2-C-methyl-D-erythritol 2-phosphate + ADP + H(+). It participates in isoprenoid biosynthesis; isopentenyl diphosphate biosynthesis via DXP pathway; isopentenyl diphosphate from 1-deoxy-D-xylulose 5-phosphate: step 3/6. Its function is as follows. Catalyzes the phosphorylation of the position 2 hydroxy group of 4-diphosphocytidyl-2C-methyl-D-erythritol. This Cupriavidus necator (strain ATCC 17699 / DSM 428 / KCTC 22496 / NCIMB 10442 / H16 / Stanier 337) (Ralstonia eutropha) protein is 4-diphosphocytidyl-2-C-methyl-D-erythritol kinase.